Consider the following 285-residue polypeptide: Protoheme IX farnesyltransferase (285 aa).

The next 9 helical transmembrane spans lie at Ile-8–Ala-28, Tyr-36–Phe-56, Leu-80–Ile-100, Phe-107–Phe-127, Phe-133–Ala-153, Ile-163–Met-183, Ile-209–Leu-229, Asn-232–Ile-252, and Phe-265–Phe-285.

It belongs to the UbiA prenyltransferase family. Protoheme IX farnesyltransferase subfamily.

The protein resides in the cell membrane. The catalysed reaction is heme b + (2E,6E)-farnesyl diphosphate + H2O = Fe(II)-heme o + diphosphate. The protein operates within porphyrin-containing compound metabolism; heme O biosynthesis; heme O from protoheme: step 1/1. Converts heme B (protoheme IX) to heme O by substitution of the vinyl group on carbon 2 of heme B porphyrin ring with a hydroxyethyl farnesyl side group. This chain is Protoheme IX farnesyltransferase, found in Buchnera aphidicola subsp. Acyrthosiphon pisum (strain Tuc7).